The chain runs to 473 residues: Argininosuccinate lyase (473 aa).

Belongs to the lyase 1 family. Argininosuccinate lyase subfamily.

It is found in the cytoplasm. It catalyses the reaction 2-(N(omega)-L-arginino)succinate = fumarate + L-arginine. Its pathway is amino-acid biosynthesis; L-arginine biosynthesis; L-arginine from L-ornithine and carbamoyl phosphate: step 3/3. The chain is Argininosuccinate lyase from Streptomyces clavuligerus.